Consider the following 556-residue polypeptide: MKSDIEIAQSIALKPITEIVEKVGIAFDDIELYGKYKAKLSFDKINEVKSNPVGKLILVTAINPTPAGEGKSTMSIGLADALNKIGKKTMIALREPSLGPVMGIKGGAAGGGYAQVLPMEDINLHFTGDMHAITTANNALSALIDNHLQQGNELGIDQRRIIWKRVLDLNDRALRHVIVGLGSPVNGVPREDGFDITVASEIMAILCLATDLKDLKERLANIVVAYDYNRKPVYVRDLKVEGALTLILRDAIKPNLVQTIYGTPALVHGGPFANIAHGCNSVLATSTALRLADYTVTEAGFGADLGAEKFLDIKVPNLPTSPDAVVVVATLRALKMHGGVAKTDLNQENVEAVRAGFANLERHVNNMRQYGVPVVVAINEFVADTEAEIAVLKELCQSIDVPVELASVWANGAEGGVALAETVVKVIEQEKANYQRLYNDQDSVEEKVRKIVKNIYGGDAVQFSAKAKNQLKQFAEFGWDKLPVCMAKTQYSFSDNPNLLGAPSGFDITIREFVPKTGAGFIVALTGDVMTMPGLPKHPAALNMDVSEEGTAIGLF.

65–72 (TPAGEGKS) serves as a coordination point for ATP.

Belongs to the formate--tetrahydrofolate ligase family.

It carries out the reaction (6S)-5,6,7,8-tetrahydrofolate + formate + ATP = (6R)-10-formyltetrahydrofolate + ADP + phosphate. It participates in one-carbon metabolism; tetrahydrofolate interconversion. The polypeptide is Formate--tetrahydrofolate ligase (Streptococcus uberis (strain ATCC BAA-854 / 0140J)).